We begin with the raw amino-acid sequence, 524 residues long: uncharacterized protein (524 aa).

Positions 1–26 are cleaved as a signal peptide; that stretch reads MLKIDMWFKLKSLGFSLISLQALLAS. The N-palmitoyl cysteine moiety is linked to residue Cys27. Residue Cys27 is the site of S-diacylglycerol cysteine attachment. The interval 37–68 is disordered; sequence IEEKNDSTTDNNATPFKDEQSDQGTEVNQQPK. Polar residues predominate over residues 58–68; the sequence is DQGTEVNQQPK.

This sequence belongs to the MG067/MG068/MG395 family.

The protein localises to the cell membrane. This is an uncharacterized protein from Mycoplasma genitalium (strain ATCC 33530 / DSM 19775 / NCTC 10195 / G37) (Mycoplasmoides genitalium).